A 111-amino-acid polypeptide reads, in one-letter code: Cytochrome c6 (111 aa).

Positions 1-25 (MKKIFSLVLLGIALFTFAFSSPALA) are cleaved as a signal peptide. 4 residues coordinate heme c: cysteine 39, cysteine 42, histidine 43, and methionine 83.

This sequence belongs to the cytochrome c family. PetJ subfamily. Monomer. In terms of processing, binds 1 heme c group covalently per subunit.

The protein localises to the cellular thylakoid lumen. Its function is as follows. Functions as an electron carrier between membrane-bound cytochrome b6-f and photosystem I in oxygenic photosynthesis. The chain is Cytochrome c6 (petJ) from Nostoc sp. (strain PCC 7120 / SAG 25.82 / UTEX 2576).